A 502-amino-acid polypeptide reads, in one-letter code: Probable glycine dehydrogenase (decarboxylating) subunit 2 (502 aa).

N6-(pyridoxal phosphate)lysine is present on lysine 273.

Belongs to the GcvP family. C-terminal subunit subfamily. The glycine cleavage system is composed of four proteins: P, T, L and H. In this organism, the P 'protein' is a heterodimer of two subunits. Requires pyridoxal 5'-phosphate as cofactor.

The enzyme catalyses N(6)-[(R)-lipoyl]-L-lysyl-[glycine-cleavage complex H protein] + glycine + H(+) = N(6)-[(R)-S(8)-aminomethyldihydrolipoyl]-L-lysyl-[glycine-cleavage complex H protein] + CO2. Functionally, the glycine cleavage system catalyzes the degradation of glycine. The P protein binds the alpha-amino group of glycine through its pyridoxal phosphate cofactor; CO(2) is released and the remaining methylamine moiety is then transferred to the lipoamide cofactor of the H protein. The polypeptide is Probable glycine dehydrogenase (decarboxylating) subunit 2 (Staphylococcus epidermidis (strain ATCC 35984 / DSM 28319 / BCRC 17069 / CCUG 31568 / BM 3577 / RP62A)).